A 245-amino-acid chain; its full sequence is Acetylglutamate kinase (245 aa).

Substrate contacts are provided by residues 41 to 42, R63, and N156; that span reads GG.

The protein belongs to the acetylglutamate kinase family. ArgB subfamily.

It localises to the cytoplasm. The catalysed reaction is N-acetyl-L-glutamate + ATP = N-acetyl-L-glutamyl 5-phosphate + ADP. Its pathway is amino-acid biosynthesis; L-arginine biosynthesis; N(2)-acetyl-L-ornithine from L-glutamate: step 2/4. Functionally, catalyzes the ATP-dependent phosphorylation of N-acetyl-L-glutamate. This Streptococcus gordonii (strain Challis / ATCC 35105 / BCRC 15272 / CH1 / DL1 / V288) protein is Acetylglutamate kinase.